Here is a 341-residue protein sequence, read N- to C-terminus: D-aspartate oxidase (341 aa).

FAD is bound by residues Asp-36, Arg-37, Thr-43, Ser-44, Met-50, Gly-307, Ile-311, and Ser-312. The Microbody targeting signal motif lies at 339 to 341 (SKL).

Belongs to the DAMOX/DASOX family. In terms of assembly, dimer or tetramer. Interacts with PEX5; the interaction is direct and required for localization of DDO to the peroxisome. The cofactor is FAD. In terms of tissue distribution, expressed in the small intestine (at protein level). Expressed in the ependymal cell layer of the telencephalic ventricles, hippocampus, thalamus, cerebellum, midbrain region, pons, olfactory bulbs, and cortex. Repressed in the testis. Expressed in the kidney, liver, stomach, pancreas, uterus, lactating breast, involuting mammary gland, brain, heart, lung, and skin. As to expression, expressed in kidney, liver, pancreas, and in the mammary gland regardless of lactation status.

It localises to the peroxisome matrix. The protein resides in the cytoplasm. Its subcellular location is the cytosol. The catalysed reaction is D-aspartate + O2 + H2O = oxaloacetate + H2O2 + NH4(+). It catalyses the reaction D-glutamate + O2 + H2O = H2O2 + 2-oxoglutarate + NH4(+). Inhibited by the benzodiazepine olanzapine; chronic systemic administration of the benzodiazepine increases levels of D-aspartate and L-glutamate in the prefrontal cortex. Efficiently inhibited by 5-aminonicotinic acid (5-AN) and 1,4-Dihydropyrido[2,3-b]pyrazine-2,3-dione (DPPD). Inhibited by aminooxyacetic acid, thiolactomycin, anthranilic acid, malonate, meso-tartrate and L-tartrate. Benzoate has no effect on activity. Its function is as follows. Selectively catalyzes the oxidative deamination of acidic amino acids. Suppresses the level of D-aspartate in the brain, an amino acid that can act as an agonist for glutamate receptors. Protects the organism from the toxicity of D-amino acids. May also function in the intestine. In terms of biological role, selectively catalyzes the oxidative deamination of acidic amino acids. Does not exhibit D-aspartate oxidase activity. In Mus musculus (Mouse), this protein is D-aspartate oxidase (Ddo).